We begin with the raw amino-acid sequence, 280 residues long: Phosphatidylserine decarboxylase proenzyme (280 aa).

Catalysis depends on charge relay system; for autoendoproteolytic cleavage activity residues Asp-90, His-146, and Ser-247. Ser-247 acts as the Schiff-base intermediate with substrate; via pyruvic acid; for decarboxylase activity in catalysis. Pyruvic acid (Ser); by autocatalysis is present on Ser-247.

Belongs to the phosphatidylserine decarboxylase family. PSD-B subfamily. Prokaryotic type I sub-subfamily. As to quaternary structure, heterodimer of a large membrane-associated beta subunit and a small pyruvoyl-containing alpha subunit. Requires pyruvate as cofactor. Post-translationally, is synthesized initially as an inactive proenzyme. Formation of the active enzyme involves a self-maturation process in which the active site pyruvoyl group is generated from an internal serine residue via an autocatalytic post-translational modification. Two non-identical subunits are generated from the proenzyme in this reaction, and the pyruvate is formed at the N-terminus of the alpha chain, which is derived from the carboxyl end of the proenzyme. The autoendoproteolytic cleavage occurs by a canonical serine protease mechanism, in which the side chain hydroxyl group of the serine supplies its oxygen atom to form the C-terminus of the beta chain, while the remainder of the serine residue undergoes an oxidative deamination to produce ammonia and the pyruvoyl prosthetic group on the alpha chain. During this reaction, the Ser that is part of the protease active site of the proenzyme becomes the pyruvoyl prosthetic group, which constitutes an essential element of the active site of the mature decarboxylase.

The protein localises to the cell membrane. The enzyme catalyses a 1,2-diacyl-sn-glycero-3-phospho-L-serine + H(+) = a 1,2-diacyl-sn-glycero-3-phosphoethanolamine + CO2. It functions in the pathway phospholipid metabolism; phosphatidylethanolamine biosynthesis; phosphatidylethanolamine from CDP-diacylglycerol: step 2/2. Its function is as follows. Catalyzes the formation of phosphatidylethanolamine (PtdEtn) from phosphatidylserine (PtdSer). The polypeptide is Phosphatidylserine decarboxylase proenzyme (Myxococcus xanthus (strain DK1622)).